The sequence spans 474 residues: Glutamate--tRNA ligase (474 aa).

A 'HIGH' region motif is present at residues 10-20 (PSPTGYLHIGG). Zn(2+)-binding residues include cysteine 107, cysteine 109, cysteine 134, and aspartate 136. Residues 244 to 248 (RLSKR) carry the 'KMSKS' region motif. Lysine 247 provides a ligand contact to ATP.

Belongs to the class-I aminoacyl-tRNA synthetase family. Glutamate--tRNA ligase type 1 subfamily. As to quaternary structure, monomer. Requires Zn(2+) as cofactor.

The protein resides in the cytoplasm. The enzyme catalyses tRNA(Glu) + L-glutamate + ATP = L-glutamyl-tRNA(Glu) + AMP + diphosphate. Its function is as follows. Catalyzes the attachment of glutamate to tRNA(Glu) in a two-step reaction: glutamate is first activated by ATP to form Glu-AMP and then transferred to the acceptor end of tRNA(Glu). This Anaeromyxobacter sp. (strain K) protein is Glutamate--tRNA ligase.